The primary structure comprises 396 residues: Elongation factor Tu (396 aa).

The 195-residue stretch at 11–205 (KPHVNIGTIG…VIDEYIPTPV (195 aa)) folds into the tr-type G domain. Positions 20–27 (GHVDHGKT) are G1. 20–27 (GHVDHGKT) contacts GTP. Residue Thr-27 coordinates Mg(2+). A G2 region spans residues 61–65 (GITIN). A G3 region spans residues 82–85 (DAPG). GTP contacts are provided by residues 82 to 86 (DAPGH) and 137 to 140 (NKTD). The G4 stretch occupies residues 137 to 140 (NKTD). The G5 stretch occupies residues 175–177 (SAL).

Belongs to the TRAFAC class translation factor GTPase superfamily. Classic translation factor GTPase family. EF-Tu/EF-1A subfamily. Monomer.

Its subcellular location is the cytoplasm. It carries out the reaction GTP + H2O = GDP + phosphate + H(+). GTP hydrolase that promotes the GTP-dependent binding of aminoacyl-tRNA to the A-site of ribosomes during protein biosynthesis. The polypeptide is Elongation factor Tu (Oenococcus oeni (strain ATCC BAA-331 / PSU-1)).